We begin with the raw amino-acid sequence, 332 residues long: MVAVAVMGAGSWGTTMTKVFADAGNTVRLWARRDEVADEIQSTRRNQCYLPGVVIPDAVTATSDPRVALTDADIVVLGVPSHAVRDSLTRWRDFLPDDALIVSLPKGLERDTARRMSEVIAEASGRPSEKIAVLSGPNLAKEVADEQPAATVVACTDHDSAKRVQEACTTAYFRPYTNTDVIGCEIGGVAKNVIALAAGMAAGQNLGFNTAATIITRGLAETVRLGTALGANPATFSGLAGLGDLVATCNSPLSRNRTFGEHLSQGMSLEEAQEACHGQVAEGVNACRAIQSLARAHSVDVPIADAVVSVCFDGATVKESIMNLMERDTKAE.

Positions 11, 12, 32, 33, and 106 each coordinate NADPH. The sn-glycerol 3-phosphate site is built by lysine 106 and glycine 136. Alanine 140 contacts NADPH. Sn-glycerol 3-phosphate is bound by residues lysine 191, aspartate 244, serine 254, arginine 255, and asparagine 256. Lysine 191 functions as the Proton acceptor in the catalytic mechanism. Arginine 255 serves as a coordination point for NADPH. 2 residues coordinate NADPH: valine 280 and glutamate 282.

This sequence belongs to the NAD-dependent glycerol-3-phosphate dehydrogenase family.

It localises to the cytoplasm. The catalysed reaction is sn-glycerol 3-phosphate + NAD(+) = dihydroxyacetone phosphate + NADH + H(+). The enzyme catalyses sn-glycerol 3-phosphate + NADP(+) = dihydroxyacetone phosphate + NADPH + H(+). It participates in membrane lipid metabolism; glycerophospholipid metabolism. Functionally, catalyzes the reduction of the glycolytic intermediate dihydroxyacetone phosphate (DHAP) to sn-glycerol 3-phosphate (G3P), the key precursor for phospholipid synthesis. The protein is Glycerol-3-phosphate dehydrogenase [NAD(P)+] of Corynebacterium kroppenstedtii (strain DSM 44385 / JCM 11950 / CIP 105744 / CCUG 35717).